Here is a 133-residue protein sequence, read N- to C-terminus: Small ribosomal subunit protein uS11 (133 aa).

It belongs to the universal ribosomal protein uS11 family. As to quaternary structure, part of the 30S ribosomal subunit. Interacts with proteins S7 and S18. Binds to IF-3.

In terms of biological role, located on the platform of the 30S subunit, it bridges several disparate RNA helices of the 16S rRNA. Forms part of the Shine-Dalgarno cleft in the 70S ribosome. The sequence is that of Small ribosomal subunit protein uS11 from Bordetella petrii (strain ATCC BAA-461 / DSM 12804 / CCUG 43448).